The primary structure comprises 651 residues: Acetyl-coenzyme A synthetase (651 aa).

CoA-binding positions include 189 to 192, threonine 311, and asparagine 335; that span reads RGGK. ATP is bound by residues 387–389, 411–416, aspartate 500, and arginine 515; these read GEP and DTWWQT. Serine 523 provides a ligand contact to CoA. An ATP-binding site is contributed by arginine 526. Residues valine 537, histidine 539, and valine 542 each coordinate Mg(2+). Arginine 586 is a binding site for CoA. Position 611 is an N6-acetyllysine (lysine 611).

The protein belongs to the ATP-dependent AMP-binding enzyme family. Mg(2+) is required as a cofactor. In terms of processing, acetylated. Deacetylation by the SIR2-homolog deacetylase activates the enzyme.

The catalysed reaction is acetate + ATP + CoA = acetyl-CoA + AMP + diphosphate. In terms of biological role, catalyzes the conversion of acetate into acetyl-CoA (AcCoA), an essential intermediate at the junction of anabolic and catabolic pathways. AcsA undergoes a two-step reaction. In the first half reaction, AcsA combines acetate with ATP to form acetyl-adenylate (AcAMP) intermediate. In the second half reaction, it can then transfer the acetyl group from AcAMP to the sulfhydryl group of CoA, forming the product AcCoA. This chain is Acetyl-coenzyme A synthetase, found in Brucella melitensis biotype 2 (strain ATCC 23457).